The sequence spans 336 residues: 3-isopropylmalate dehydrogenase (336 aa).

Substrate is bound by residues arginine 87, arginine 97, arginine 121, and aspartate 211. Residues aspartate 211, aspartate 235, and aspartate 239 each contribute to the Mg(2+) site. 271–283 (GSAPDIAGQGIAD) is a binding site for NAD(+).

This sequence belongs to the isocitrate and isopropylmalate dehydrogenases family. LeuB type 2 subfamily. In terms of assembly, homodimer. Requires Mg(2+) as cofactor. It depends on Mn(2+) as a cofactor.

Its subcellular location is the cytoplasm. It catalyses the reaction (2R,3S)-3-isopropylmalate + NAD(+) = 4-methyl-2-oxopentanoate + CO2 + NADH. The protein operates within amino-acid biosynthesis; L-leucine biosynthesis; L-leucine from 3-methyl-2-oxobutanoate: step 3/4. Catalyzes the oxidation of 3-carboxy-2-hydroxy-4-methylpentanoate (3-isopropylmalate) to 3-carboxy-4-methyl-2-oxopentanoate. The product decarboxylates to 4-methyl-2 oxopentanoate. The protein is 3-isopropylmalate dehydrogenase (leuB) of Mycobacterium tuberculosis (strain CDC 1551 / Oshkosh).